The primary structure comprises 1019 residues: Clotting factor C (1019 aa).

Positions 1-25 are cleaved as a signal peptide; sequence MVLASFLVSGLVLGILAQQMRPVQS. The EGF-like domain maps to 102–137; sequence YGTWCSGECQCKNGGICDQRTGACTCRDRYEGAHCE. 16 cysteine pairs are disulfide-bonded: cysteine 110-cysteine 118, cysteine 112-cysteine 125, cysteine 127-cysteine 136, cysteine 142-cysteine 182, cysteine 168-cysteine 195, cysteine 199-cysteine 241, cysteine 227-cysteine 254, cysteine 260-cysteine 308, cysteine 294-cysteine 321, cysteine 331-cysteine 350, cysteine 354-cysteine 374, cysteine 464-cysteine 564, cysteine 538-cysteine 556, cysteine 576-cysteine 621, cysteine 607-cysteine 634, and cysteine 720-cysteine 748. Sushi domains are found at residues 140–197, 198–256, and 258–323; these read KGCP…KCIR, ECAK…QCKK, and VFCP…SCVK. Residues 325–421 form the LCCL domain; that stretch reads ADREVDCDSK…EELKSLARSF (97 aa). Residues 436–568 form the C-type lectin domain; it reads CPDGWFEVEE…PSSFACMMDL (133 aa). Residues asparagine 523 and asparagine 534 are each glycosylated (N-linked (GlcNAc...) asparagine). Sushi domains are found at residues 574-636 and 689-750; these read AKCD…RCIK and PRSS…SCIP. 3 N-linked (GlcNAc...) asparagine glycosylation sites follow: asparagine 624, asparagine 740, and asparagine 767. The Peptidase S1 domain maps to 763-1019; that stretch reads IWNGNSTEIG…VFLSWIRQFI (257 aa). The cysteines at positions 794 and 810 are disulfide-linked. Catalysis depends on charge relay system residues histidine 809 and aspartate 865. A glycan (N-linked (GlcNAc...) asparagine) is linked at asparagine 912. Cysteine 932 and cysteine 951 form a disulfide bridge. Aspartate 960 lines the substrate pocket. Cysteine 962 and cysteine 996 are oxidised to a cystine. Residue serine 966 is the Charge relay system of the active site.

The protein belongs to the peptidase S1 family. Heterodimer of a light chain and a heavy chain linked by a disulfide bond. Forms a covalent heterodimer with intracellular coagulation inhibitor 1/LICI-1. Forms a covalent heterodimer with intracellular coagulation inhibitor 2/LICI-2. In terms of processing, N-glycosylated. Post-translationally, lipopolysaccharide (LPS) activates clotting factor C by inducing the proteolytic cleavage of the clotting factor C light chain into clotting factor C chains A and B. Clotting factor C chains heavy, A and B remain associated via interchain disulfide bonds. Expressed in hemocytes (at protein level).

Its subcellular location is the secreted. It carries out the reaction Selective cleavage of 103-Arg-|-Ser-104 and 124-Ile-|-Ile-125 bonds in Limulus clotting factor B to form activated factor B. Cleavage of -Pro-Arg-|-Xaa- bonds in synthetic substrates.. Its activity is regulated as follows. Activated by Gram-negative bacterial lipopolysaccharides. Inhibited by intracellular coagulation inhibitor 1/LICI-1 and to a lesser extent by intracellular coagulation inhibitors 2/LICI-2 and 3/LICI-3. Inhibited by the small molecule diisopropyl fluorophosphate (DFP). Functionally, this enzyme is closely associated with an endotoxin-sensitive hemolymph coagulation system which may play important roles in both hemostasis and host defense mechanisms. Its active form catalyzes the activation of clotting factor B. In Tachypleus tridentatus (Japanese horseshoe crab), this protein is Clotting factor C.